Consider the following 337-residue polypeptide: Ketol-acid reductoisomerase (NADP(+)) (337 aa).

The KARI N-terminal Rossmann domain maps to 3-183 (VEMFYDDDAD…GGTRAGVIKT (181 aa)). NADP(+) contacts are provided by residues 26–29 (YGSQ), Lys-49, Ser-52, Ser-54, and 84–87 (DTAQ). His-109 is an active-site residue. Gly-135 is an NADP(+) binding site. Residues 184–329 (TFKEETETDL…KKLRDLMSWV (146 aa)) form the KARI C-terminal knotted domain. The Mg(2+) site is built by Asp-192, Glu-196, Glu-228, and Glu-232. Ser-253 lines the substrate pocket.

Belongs to the ketol-acid reductoisomerase family. The cofactor is Mg(2+).

The catalysed reaction is (2R)-2,3-dihydroxy-3-methylbutanoate + NADP(+) = (2S)-2-acetolactate + NADPH + H(+). It carries out the reaction (2R,3R)-2,3-dihydroxy-3-methylpentanoate + NADP(+) = (S)-2-ethyl-2-hydroxy-3-oxobutanoate + NADPH + H(+). Its pathway is amino-acid biosynthesis; L-isoleucine biosynthesis; L-isoleucine from 2-oxobutanoate: step 2/4. It participates in amino-acid biosynthesis; L-valine biosynthesis; L-valine from pyruvate: step 2/4. Functionally, involved in the biosynthesis of branched-chain amino acids (BCAA). Catalyzes an alkyl-migration followed by a ketol-acid reduction of (S)-2-acetolactate (S2AL) to yield (R)-2,3-dihydroxy-isovalerate. In the isomerase reaction, S2AL is rearranged via a Mg-dependent methyl migration to produce 3-hydroxy-3-methyl-2-ketobutyrate (HMKB). In the reductase reaction, this 2-ketoacid undergoes a metal-dependent reduction by NADPH to yield (R)-2,3-dihydroxy-isovalerate. The chain is Ketol-acid reductoisomerase (NADP(+)) from Rhodococcus erythropolis (strain PR4 / NBRC 100887).